The chain runs to 189 residues: Cancer/testis antigen family 45 member A1 (189 aa).

Basic and acidic residues predominate over residues 1 to 23; sequence MTDKTEKVAVDPETVFKRPRECD. Disordered stretches follow at residues 1-27 and 83-118; these read MTDK…SPSY and RMMQ…SPKS.

This sequence belongs to the CT45 family. As to expression, testis specific. Expressed in cancer cell lines.

It is found in the nucleus. The polypeptide is Cancer/testis antigen family 45 member A1 (Homo sapiens (Human)).